The primary structure comprises 441 residues: 4-alpha-glucanotransferase (441 aa).

Ca(2+) is bound by residues D13, N15, D17, V19, and D21. Catalysis depends on D186, which acts as the Nucleophile. The active-site Proton donor is the E216.

This sequence belongs to the glycosyl hydrolase 13 family. In terms of assembly, monomer. Requires Ca(2+) as cofactor.

It localises to the cytoplasm. The catalysed reaction is Transfers a segment of a (1-&gt;4)-alpha-D-glucan to a new position in an acceptor, which may be glucose or a (1-&gt;4)-alpha-D-glucan.. This Thermotoga maritima (strain ATCC 43589 / DSM 3109 / JCM 10099 / NBRC 100826 / MSB8) protein is 4-alpha-glucanotransferase (mgtA).